The sequence spans 137 residues: Basic phospholipase A2 3 (137 aa).

The first 11 residues, 1-11, serve as a signal peptide directing secretion; it reads LVAVCVSLLGA. The propeptide occupies 12–19; it reads ANIPPQPL. Disulfide bonds link cysteine 30–cysteine 89, cysteine 44–cysteine 136, cysteine 46–cysteine 62, cysteine 61–cysteine 117, cysteine 68–cysteine 110, cysteine 78–cysteine 103, and cysteine 96–cysteine 108. Residues tyrosine 45, glycine 47, and glycine 49 each coordinate Ca(2+). Histidine 65 is an active-site residue. Aspartate 66 is a Ca(2+) binding site. The active site involves aspartate 111.

This sequence belongs to the phospholipase A2 family. Group I subfamily. D49 sub-subfamily. Monomer, or homotrimer. Was firstly described as a trimer, but has been reinterpreted with the possibility of being a monomer. It depends on Ca(2+) as a cofactor. Expressed by the venom gland.

It is found in the secreted. It carries out the reaction a 1,2-diacyl-sn-glycero-3-phosphocholine + H2O = a 1-acyl-sn-glycero-3-phosphocholine + a fatty acid + H(+). In terms of biological role, snake venom phospholipase A2 (PLA2) that shows anticoagulant and neurotoxic activities. PLA2 catalyzes the calcium-dependent hydrolysis of the 2-acyl groups in 3-sn-phosphoglycerides. The chain is Basic phospholipase A2 3 from Bungarus caeruleus (Indian krait).